Consider the following 337-residue polypeptide: GTP 3',8-cyclase (337 aa).

The region spanning 17 to 243 (PFQRQYYYLR…HKSHTDGPAK (227 aa)) is the Radical SAM core domain. R26 provides a ligand contact to GTP. [4Fe-4S] cluster contacts are provided by C33 and C37. An S-adenosyl-L-methionine-binding site is contributed by Y39. C40 is a binding site for [4Fe-4S] cluster. Position 76 (R76) interacts with GTP. G80 serves as a coordination point for S-adenosyl-L-methionine. T107 is a GTP binding site. S131 serves as a coordination point for S-adenosyl-L-methionine. GTP is bound at residue K168. M202 provides a ligand contact to S-adenosyl-L-methionine. [4Fe-4S] cluster-binding residues include C265 and C268. Position 270–272 (270–272 (RLR)) interacts with GTP. C282 contributes to the [4Fe-4S] cluster binding site.

Belongs to the radical SAM superfamily. MoaA family. As to quaternary structure, monomer and homodimer. It depends on [4Fe-4S] cluster as a cofactor.

The enzyme catalyses GTP + AH2 + S-adenosyl-L-methionine = (8S)-3',8-cyclo-7,8-dihydroguanosine 5'-triphosphate + 5'-deoxyadenosine + L-methionine + A + H(+). The protein operates within cofactor biosynthesis; molybdopterin biosynthesis. Functionally, catalyzes the cyclization of GTP to (8S)-3',8-cyclo-7,8-dihydroguanosine 5'-triphosphate. In Haemophilus influenzae (strain PittEE), this protein is GTP 3',8-cyclase.